The following is a 155-amino-acid chain: Endoribonuclease YbeY (155 aa).

Zn(2+) contacts are provided by histidine 110, histidine 114, and histidine 120.

It belongs to the endoribonuclease YbeY family. It depends on Zn(2+) as a cofactor.

Its subcellular location is the cytoplasm. Functionally, single strand-specific metallo-endoribonuclease involved in late-stage 70S ribosome quality control and in maturation of the 3' terminus of the 16S rRNA. In Deinococcus geothermalis (strain DSM 11300 / CIP 105573 / AG-3a), this protein is Endoribonuclease YbeY.